The following is a 397-amino-acid chain: tRNA-specific 2-thiouridylase MnmA (397 aa).

Residues 6 to 13 (AMSGGVDS) and Leu-32 contribute to the ATP site. Cys-101 acts as the Nucleophile in catalysis. Cys-101 and Cys-199 are oxidised to a cystine. Residue Gly-125 participates in ATP binding. Positions 148 to 150 (KDQ) are interaction with tRNA. The active-site Cysteine persulfide intermediate is Cys-199.

The protein belongs to the MnmA/TRMU family.

The protein localises to the cytoplasm. The catalysed reaction is S-sulfanyl-L-cysteinyl-[protein] + uridine(34) in tRNA + AH2 + ATP = 2-thiouridine(34) in tRNA + L-cysteinyl-[protein] + A + AMP + diphosphate + H(+). Functionally, catalyzes the 2-thiolation of uridine at the wobble position (U34) of tRNA, leading to the formation of s(2)U34. The chain is tRNA-specific 2-thiouridylase MnmA from Clavibacter sepedonicus (Clavibacter michiganensis subsp. sepedonicus).